Here is a 380-residue protein sequence, read N- to C-terminus: Cytochrome b (380 aa).

The next 4 membrane-spanning stretches (helical) occupy residues 33–53 (FGSL…FLAM), 77–98 (WLIR…YLHV), 113–133 (WNIG…GYVL), and 178–198 (FFAF…IHLL). Positions 83 and 97 each coordinate heme b. Residues His182 and His196 each coordinate heme b. His201 contacts a ubiquinone. 4 consecutive transmembrane segments (helical) span residues 226–246 (YKDL…ALFS), 288–308 (LGGV…PMLH), 320–340 (LSQI…WIGG), and 347–367 (FVLI…IALP).

The protein belongs to the cytochrome b family. The cytochrome bc1 complex contains 3 respiratory subunits (MT-CYB, CYC1 and UQCRFS1), 2 core proteins (UQCRC1 and UQCRC2) and probably 6 low-molecular weight proteins. Heme b is required as a cofactor.

Its subcellular location is the mitochondrion inner membrane. Component of the ubiquinol-cytochrome c reductase complex (complex III or cytochrome b-c1 complex) that is part of the mitochondrial respiratory chain. The b-c1 complex mediates electron transfer from ubiquinol to cytochrome c. Contributes to the generation of a proton gradient across the mitochondrial membrane that is then used for ATP synthesis. The sequence is that of Cytochrome b (mt-cyb) from Acipenser transmontanus (White sturgeon).